A 699-amino-acid polypeptide reads, in one-letter code: Elongation factor G (699 aa).

The tr-type G domain occupies 8 to 289 (ERYRNIGISA…AVVEYMPAPT (282 aa)). GTP contacts are provided by residues 17-24 (AHIDAGKT), 88-92 (DTPGH), and 142-145 (NKMD).

Belongs to the TRAFAC class translation factor GTPase superfamily. Classic translation factor GTPase family. EF-G/EF-2 subfamily.

It localises to the cytoplasm. In terms of biological role, catalyzes the GTP-dependent ribosomal translocation step during translation elongation. During this step, the ribosome changes from the pre-translocational (PRE) to the post-translocational (POST) state as the newly formed A-site-bound peptidyl-tRNA and P-site-bound deacylated tRNA move to the P and E sites, respectively. Catalyzes the coordinated movement of the two tRNA molecules, the mRNA and conformational changes in the ribosome. In Variovorax paradoxus (strain S110), this protein is Elongation factor G.